The following is a 405-amino-acid chain: Homocitrate synthase AksA (405 aa).

One can recognise a Pyruvate carboxyltransferase domain in the interval 23 to 274 (IEICDVTLRD…IERYDTTKLN (252 aa)).

Belongs to the alpha-IPM synthase/homocitrate synthase family.

The catalysed reaction is acetyl-CoA + 2-oxoglutarate + H2O = (2R)-homocitrate + CoA + H(+). It carries out the reaction 2-oxoadipate + acetyl-CoA + H2O = (R)-dihomocitrate + CoA + H(+). It catalyses the reaction 2-oxoheptanedioate + acetyl-CoA + H2O = (R)-trihomocitrate + CoA + H(+). It functions in the pathway organic acid metabolism; 2-oxosuberate biosynthesis. Its function is as follows. Catalyzes the condensation of alpha-ketoglutarate and acetyl-CoA to form (R)-homocitrate. Can also catalyze the condensation of alpha-ketoadipate with acetyl-CoA to form (R)-homo(2)citrate, and the condensation of alpha-ketopimelate with acetyl-CoA to form (R)-homo(3)citrate. These reactions are part of the biosynthesis pathway of coenzyme B and biotin. In Methanosarcina mazei (strain ATCC BAA-159 / DSM 3647 / Goe1 / Go1 / JCM 11833 / OCM 88) (Methanosarcina frisia), this protein is Homocitrate synthase AksA (aksA).